The sequence spans 412 residues: Serine hydroxymethyltransferase (412 aa).

(6S)-5,6,7,8-tetrahydrofolate is bound by residues L117 and 121–123 (GHL). At K226 the chain carries N6-(pyridoxal phosphate)lysine. Residue 349-351 (SPF) participates in (6S)-5,6,7,8-tetrahydrofolate binding.

Belongs to the SHMT family. In terms of assembly, homodimer. It depends on pyridoxal 5'-phosphate as a cofactor.

Its subcellular location is the cytoplasm. The enzyme catalyses (6R)-5,10-methylene-5,6,7,8-tetrahydrofolate + glycine + H2O = (6S)-5,6,7,8-tetrahydrofolate + L-serine. It functions in the pathway one-carbon metabolism; tetrahydrofolate interconversion. Its pathway is amino-acid biosynthesis; glycine biosynthesis; glycine from L-serine: step 1/1. In terms of biological role, catalyzes the reversible interconversion of serine and glycine with tetrahydrofolate (THF) serving as the one-carbon carrier. This reaction serves as the major source of one-carbon groups required for the biosynthesis of purines, thymidylate, methionine, and other important biomolecules. Also exhibits THF-independent aldolase activity toward beta-hydroxyamino acids, producing glycine and aldehydes, via a retro-aldol mechanism. The chain is Serine hydroxymethyltransferase from Nitratidesulfovibrio vulgaris (strain DSM 19637 / Miyazaki F) (Desulfovibrio vulgaris).